The primary structure comprises 194 residues: MSLVPVVVEQTNRGERSYDIYSRLLKDRIIMLSEEVNDTTASLIVAQLLFLEAEDPDKDIHLYINSPGGSITSGMAIYDTMQYIKPDVSTICVGMAASMGAFLLVAGAKGKRYALPNSEVMIHQPLGGFQGQATDIGIHAERILKMKKKLNTILSDRTGKPLEQVELDTERDHFLSAEEAKEYGLIDEVIDKKK.

Serine 98 serves as the catalytic Nucleophile. Histidine 123 is a catalytic residue.

This sequence belongs to the peptidase S14 family. As to quaternary structure, fourteen ClpP subunits assemble into 2 heptameric rings which stack back to back to give a disk-like structure with a central cavity, resembling the structure of eukaryotic proteasomes.

The protein localises to the cytoplasm. It carries out the reaction Hydrolysis of proteins to small peptides in the presence of ATP and magnesium. alpha-casein is the usual test substrate. In the absence of ATP, only oligopeptides shorter than five residues are hydrolyzed (such as succinyl-Leu-Tyr-|-NHMec, and Leu-Tyr-Leu-|-Tyr-Trp, in which cleavage of the -Tyr-|-Leu- and -Tyr-|-Trp bonds also occurs).. In terms of biological role, cleaves peptides in various proteins in a process that requires ATP hydrolysis. Has a chymotrypsin-like activity. Plays a major role in the degradation of misfolded proteins. The sequence is that of ATP-dependent Clp protease proteolytic subunit from Clostridium botulinum (strain Loch Maree / Type A3).